Here is a 728-residue protein sequence, read N- to C-terminus: Probable 3',5'-cyclic phosphodiesterase pde-5 (728 aa).

A GAF domain is found at 214 to 371 (SMDAVIIKVM…HHAKLYDKIR (158 aa)). One can recognise a PDEase domain in the interval 390 to 709 (CNADEVNKLK…KKWEELAEEQ (320 aa)). His465 (proton donor) is an active-site residue. Positions 469, 503, 504, and 614 each coordinate a divalent metal cation. Residues 691–728 (MRERCEYNAKKWEELAEEQRKKQEALAQQNGEANETQE) adopt a coiled-coil conformation. The disordered stretch occupies residues 708–728 (EQRKKQEALAQQNGEANETQE). The segment covering 716 to 728 (LAQQNGEANETQE) has biased composition (polar residues).

Belongs to the cyclic nucleotide phosphodiesterase family. A divalent metal cation is required as a cofactor.

It catalyses the reaction a nucleoside 3',5'-cyclic phosphate + H2O = a nucleoside 5'-phosphate + H(+). In terms of biological role, redundantly with pde-1, plays a role in the AFD thermosensory neurons to regulate microvilli receptive ending morphology, possibly by regulating cGMP levels. This is Probable 3',5'-cyclic phosphodiesterase pde-5 (pde-5) from Caenorhabditis elegans.